The primary structure comprises 287 residues: Pyridoxal 5'-phosphate synthase subunit PdxS (287 aa).

Aspartate 21 is a D-ribose 5-phosphate binding site. Lysine 78 serves as the catalytic Schiff-base intermediate with D-ribose 5-phosphate. Glycine 150 is a D-ribose 5-phosphate binding site. Residue arginine 162 coordinates D-glyceraldehyde 3-phosphate. Residues glycine 211 and 232–233 (GS) contribute to the D-ribose 5-phosphate site.

Belongs to the PdxS/SNZ family. In terms of assembly, in the presence of PdxT, forms a dodecamer of heterodimers.

The catalysed reaction is aldehydo-D-ribose 5-phosphate + D-glyceraldehyde 3-phosphate + L-glutamine = pyridoxal 5'-phosphate + L-glutamate + phosphate + 3 H2O + H(+). Its pathway is cofactor biosynthesis; pyridoxal 5'-phosphate biosynthesis. In terms of biological role, catalyzes the formation of pyridoxal 5'-phosphate from ribose 5-phosphate (RBP), glyceraldehyde 3-phosphate (G3P) and ammonia. The ammonia is provided by the PdxT subunit. Can also use ribulose 5-phosphate and dihydroxyacetone phosphate as substrates, resulting from enzyme-catalyzed isomerization of RBP and G3P, respectively. This is Pyridoxal 5'-phosphate synthase subunit PdxS from Francisella tularensis subsp. tularensis (strain FSC 198).